The primary structure comprises 175 residues: CASP-like protein 2C1 (175 aa).

The Cytoplasmic segment spans residues methionine 1–threonine 7. The helical transmembrane segment at glutamate 8–leucine 28 threads the bilayer. Residues aspartate 29–glutamate 51 lie on the Extracellular side of the membrane. The chain crosses the membrane as a helical span at residues alanine 52–tryptophan 72. Over tyrosine 73–glutamine 91 the chain is Cytoplasmic. The helical transmembrane segment at threonine 92 to valine 112 threads the bilayer. Residues threonine 113 to serine 136 lie on the Extracellular side of the membrane. A helical transmembrane segment spans residues alanine 137 to phenylalanine 157. Over asparagine 158–serine 175 the chain is Cytoplasmic.

The protein belongs to the Casparian strip membrane proteins (CASP) family. As to quaternary structure, homodimer and heterodimers.

It is found in the cell membrane. This chain is CASP-like protein 2C1, found in Arabidopsis lyrata subsp. lyrata (Lyre-leaved rock-cress).